The sequence spans 283 residues: MAPPTFADLGKSAKDLFNKGYNFGFLKIDSTTRAGDNKEVEFKSAASHNIGSGKLGGNLDVKYKIPQYGITLTEKWNTENQLGTVIEVNEQFGRGLKVTLDSLYAPHAGKRSGKVKLDWALPTARVTADVGVTSAPVINAAGVFSRDGWLIGAAATFDSSSNKLAATSLAFGHSTPQYTLHSFVINSTDFGASLYHKVASNVEVGTQLGWKVGGNGADYALATKYAPSRDLTVRAKVNSSSQVAVAATHSLSPALKLTLSTQFNLAANDAHKFGLGLEFDPSN.

The protein belongs to the eukaryotic mitochondrial porin family.

Its subcellular location is the mitochondrion outer membrane. Forms a channel through the cell membrane that allows diffusion of small hydrophilic molecules. Plays a role in maintaining mitochondrial morphology. The polypeptide is Probable voltage-dependent anion-selective channel (Caenorhabditis elegans).